Reading from the N-terminus, the 315-residue chain is Olfactory receptor 2V1 (315 aa).

The next 7 helical transmembrane spans lie at 31 to 51 (TVML…LLIY), 59 to 79 (PMYF…CNIV), 100 to 120 (IQIG…GLMA), 145 to 165 (IAGS…VAAM), 196 to 216 (FDTL…SIIV), 239 to 259 (LATC…AMFI), and 273 to 293 (KVVS…IYSL). A disulfide bridge connects residues cysteine 98 and cysteine 180.

It belongs to the G-protein coupled receptor 1 family.

The protein localises to the cell membrane. Odorant receptor. Activated by (+) and (-)-limonene. The protein is Olfactory receptor 2V1 of Mus musculus (Mouse).